The primary structure comprises 61 residues: Photosystem II reaction center protein Z (61 aa).

The next 2 helical transmembrane spans lie at 5 to 25 (LTALLVLISLALVVTVPVALA) and 38 to 58 (NKAFQLWVGLVVAIATADGIS).

It belongs to the PsbZ family. PSII is composed of 1 copy each of membrane proteins PsbA, PsbB, PsbC, PsbD, PsbE, PsbF, PsbH, PsbI, PsbJ, PsbK, PsbL, PsbM, PsbT, PsbX, PsbY, PsbZ, Psb30/Ycf12, at least 3 peripheral proteins of the oxygen-evolving complex and a large number of cofactors. It forms dimeric complexes.

The protein localises to the plastid. The protein resides in the chloroplast thylakoid membrane. Its function is as follows. May control the interaction of photosystem II (PSII) cores with the light-harvesting antenna, regulates electron flow through the 2 photosystem reaction centers. PSII is a light-driven water plastoquinone oxidoreductase, using light energy to abstract electrons from H(2)O, generating a proton gradient subsequently used for ATP formation. This is Photosystem II reaction center protein Z from Skeletonema costatum (Marine centric diatom).